Consider the following 222-residue polypeptide: Glutathione S-transferase 3 (222 aa).

The GST N-terminal domain maps to Ala2 to Gly83. Glutathione is bound by residues Ser12, Pro13–Asn14, His41–Lys42, Gln54–Ile55, and Glu67–Ser68. In terms of domain architecture, GST C-terminal spans Ala89–Ser219.

This sequence belongs to the GST superfamily. Phi family. As to quaternary structure, homodimer.

It catalyses the reaction RX + glutathione = an S-substituted glutathione + a halide anion + H(+). Functionally, conjugation of reduced glutathione to a wide number of exogenous and endogenous hydrophobic electrophiles. Involved in the detoxification of certain herbicides. This Zea mays (Maize) protein is Glutathione S-transferase 3.